A 309-amino-acid polypeptide reads, in one-letter code: 5-formyl-3-hydroxy-2-methylpyridine 4-carboxylate 5-dehydrogenase (309 aa).

NAD(+)-binding positions include 12-13, Asp32, 87-89, and Lys94; these read TM and VPE.

It belongs to the 3-hydroxyacyl-CoA dehydrogenase family. As to quaternary structure, homodimer.

The catalysed reaction is 5-formyl-3-hydroxy-2-methylpyridine-4-carboxylate + NAD(+) + H2O = 5-hydroxy-6-methylpyridine-3,4-dicarboxylate + NADH + 2 H(+). It carries out the reaction 5-formyl-3-hydroxy-2-methylpyridine-4-carboxylate + NADH + H(+) = 4-pyridoxate + NAD(+). The protein operates within cofactor degradation; B6 vitamer degradation. Functionally, involved in the degradation of pyridoxine (vitamin B(6)). Catalyzes the oxidation of 5-formyl-3-hydroxy-2-methylpyridine-4-carboxylate (FHMPC) by NAD(+) to 5-hydroxy-6-methylpyridine-3,4-dicarboxylate (HMPDC). Can also catalyze the reduction of FHMPC by NADH to 4-pyridoxic acid. The chain is 5-formyl-3-hydroxy-2-methylpyridine 4-carboxylate 5-dehydrogenase from Mesorhizobium japonicum (strain LMG 29417 / CECT 9101 / MAFF 303099) (Mesorhizobium loti (strain MAFF 303099)).